Here is a 968-residue protein sequence, read N- to C-terminus: MPFALGQRWISDTESELGLGTVVQVEGRMVTLLFPATGENRMFSRSEAPLTRVIFNPGDTVESGEGWSITIEELEEKNQLVIYHGIHSETQEKVSLRETMLSHNIRFNKPQDRLFAGQIDRLERFGVRYQCQLLRHKLATSDLLGQQGPRVGLIAHQQWIAHEVGSRYAPRVLLADEVGLGKTIEAGLIIHQQLLTGRAERILVIVPDTLRHQWLVEMLRRFNLRFSVFDEDRCVEAYADNDNPFYTEQLIICSLDLLRKKKRLEQAVDADWDLMVVDEAHHLEWSEDAPSRAYKIVEALSEVVPGVLLLTATPDQLGHQSHFARLRLLDPDRFYDYDAFLAEEASYKDVAEAAEALSQDKKLPDSAINSLTELLSEKDIEPSIRLIQSKDVDAESQQAARQELLQELLDRHGTGRVLYRNSRASVKGFPKRLFNAYPHDMPAQYVTAERVNAMMGSAKQPQAKAAQALSPEKLYQAFENDSASWWKFDPRVDWLIEFLKSHRSKKVLIIASQAETALSLEEALRTREGIQATVFHEDMSIIERDKAGAYFAQEEGGAQALICSEIGSEGRNFQFASHLILFDLPLNPDLLEQRIGRLDRIGQQNDIQIHLPYLRDTAQERLMRWYHQGLNAFELTCPSGHVLFNEFADELINVLCDDDEDLMTQLLNHTQHRYKELKQAMEQGRDKLLEINSHGGERANALIKRLSDSDNDTHLIGSVIRLWDIIGVDQEDRGENSIILRPSEHMMFPTYPGLNEDGITVTFDRETALSRDDIAFITQEHPLVQTGLDLITGSETGTTSVAILKNKALPAGTLFLELIYMADASAPKSTQLYRYLPPTPIRVLLDKNGLNMADKVDYASFDKQLSAVNRHIASKLVNASQPILHPLLAKGEEYAKESLTQLVVDARAKMTQQLTGELERLEALKAVNPNIREDELEYIRNQMTEITGYMDNSQLQLDAIRMVLVSHV.

The 170-residue stretch at 163–332 (EVGSRYAPRV…FARLRLLDPD (170 aa)) folds into the Helicase ATP-binding domain. An ATP-binding site is contributed by 176 to 183 (DEVGLGKT). The DEAH box motif lies at 278–281 (DEAH). One can recognise a Helicase C-terminal domain in the interval 491–655 (RVDWLIEFLK…EFADELINVL (165 aa)).

It belongs to the SNF2/RAD54 helicase family. RapA subfamily. In terms of assembly, interacts with the RNAP. Has a higher affinity for the core RNAP than for the holoenzyme. Its ATPase activity is stimulated by binding to RNAP.

Functionally, transcription regulator that activates transcription by stimulating RNA polymerase (RNAP) recycling in case of stress conditions such as supercoiled DNA or high salt concentrations. Probably acts by releasing the RNAP, when it is trapped or immobilized on tightly supercoiled DNA. Does not activate transcription on linear DNA. Probably not involved in DNA repair. The chain is RNA polymerase-associated protein RapA from Shewanella frigidimarina (strain NCIMB 400).